Consider the following 462-residue polypeptide: tRNA pseudouridine(32) synthase, mitochondrial (462 aa).

The transit peptide at 1 to 24 directs the protein to the mitochondrion; sequence MQRNNRLRNLFTVPVIMARQLKRN. In terms of domain architecture, S4 RNA-binding spans 127-188; that stretch reads KLVDVFISEF…HEPPVTSRPI (62 aa). The active site involves aspartate 238.

This sequence belongs to the pseudouridine synthase RluA family.

It localises to the mitochondrion. The enzyme catalyses uridine(32) in tRNA = pseudouridine(32) in tRNA. Responsible for synthesis of pseudouridine from uracil-32 in mitochondrial transfer RNAs. The polypeptide is tRNA pseudouridine(32) synthase, mitochondrial (PUS9) (Saccharomyces cerevisiae (strain ATCC 204508 / S288c) (Baker's yeast)).